Consider the following 661-residue polypeptide: L-type lectin-domain containing receptor kinase V.5 (661 aa).

Residues 1–25 (MSRELIILCQPILVLFLTLFYNSHG) form the signal peptide. The Extracellular portion of the chain corresponds to 26-282 (YFVSQGSVGI…KTSNRTKTVL (257 aa)). Residues 30–250 (QGSVGIGFNG…GAIHYLMGWL (221 aa)) form a legume-lectin like region. N-linked (GlcNAc...) asparagine glycans are attached at residues Asn-45, Asn-64, Asn-116, Asn-198, and Asn-276. Residues 283–303 (AVCLTVSVFAAFVASWIGFVF) traverse the membrane as a helical segment. Topologically, residues 304 to 661 (YLRHKKVKEV…TDSSFVSHGR (358 aa)) are cytoplasmic. Residues 338–596 (FKEKQLLGKG…LGVLCSHQAA (259 aa)) enclose the Protein kinase domain. ATP contacts are provided by residues 344-352 (LGKGGFGQV) and Lys-367. Asp-464 (proton acceptor) is an active-site residue.

In the C-terminal section; belongs to the protein kinase superfamily. Ser/Thr protein kinase family. The protein in the N-terminal section; belongs to the leguminous lectin family. In terms of processing, autophosphorylated on a Ser residue. Expressed at low levels in stems, leaves, flowers and siliques.

It localises to the cell membrane. The catalysed reaction is L-seryl-[protein] + ATP = O-phospho-L-seryl-[protein] + ADP + H(+). The enzyme catalyses L-threonyl-[protein] + ATP = O-phospho-L-threonyl-[protein] + ADP + H(+). Confers resistance to the pathogenic oomycetes Phytophthora infestans and Phytophthora capsici, but confers susceptibility to the pathogenic bacteria Pseudomonas syringae. The polypeptide is L-type lectin-domain containing receptor kinase V.5 (Arabidopsis thaliana (Mouse-ear cress)).